A 53-amino-acid polypeptide reads, in one-letter code: Temporin-SHd (53 aa).

Positions 1-10 (FLGTINLSLC) are cleaved as a signal peptide. Residues 11 to 34 (EQERDADEEKRDEPDESDVEVEKR) constitute a propeptide that is removed on maturation. Residue phenylalanine 51 is modified to Phenylalanine amide.

It localises to the secreted. The protein localises to the target cell membrane. Its function is as follows. Non-amphipathic mildly cationic alpha-helical antimicrobial peptide with potent activity against Gram-positive (including methicillin-resistant Staphylococcus aureus (MRSA)) and Gram-negative bacteria, and some fungi, as well as against Trypanosoma and Leishmania (both promastigote and amastigote forms). Strongly and selectively perturbs anionic bilayer membranes by interacting with the polar head groups and acyl region of the phospholipids, with formation of regions of two coexisting phases, one phase rich in peptide and the other lipid-rich. Shows low hemolytic activity (LC(50)=44 uM) and a low toxicity for human monocytes THP-1 and THP-1-derived macrophages. Is not toxic to human hepatoma-derived cells. The polypeptide is Temporin-SHd (Pelophylax saharicus (Sahara frog)).